Consider the following 148-residue polypeptide: MVDWTDPERSAIVGLWGKISVDEIGPQALARLLIVSPWTQRHFSTFGNLSTPAAIMGNPAVAKHGKTVMHGLDRAVQNLDDIKNTYTALSVMHSEKLHVDPDNFRLLADCITVCVAAKLGPAVFSADTQEAFQKFLAVVVSALGRQYH.

A Globin domain is found at 3-148 (DWTDPERSAI…VVSALGRQYH (146 aa)). Heme b contacts are provided by His-64 and His-93.

This sequence belongs to the globin family. As to quaternary structure, heterotetramer of two alpha chains and two beta chains. Red blood cells.

In terms of biological role, involved in oxygen transport from gills to the various peripheral tissues. The protein is Hemoglobin subunit beta-4 (hbb4) of Oncorhynchus mykiss (Rainbow trout).